The following is a 1721-amino-acid chain: Latent-transforming growth factor beta-binding protein 1 (1721 aa).

A signal peptide spans 1–23 (MAGAWLRWGLLLWAGLLASSAHG). Over residues 64-81 (RSSAAAGAPSRASPGVPS) the composition is skewed to low complexity. The tract at residues 64-158 (RSSAAAGAPS…SGGGSRLQVH (95 aa)) is disordered. The segment covering 99–111 (RPPPPPPPEPARP) has biased composition (pro residues). Residues 112–130 (AVPGGQLHPNPGGHPAAAP) show a composition bias toward low complexity. The EGF-like 1 domain occupies 187-219 (TKPSCVPPCQNGGMCLRPQLCVCKPGTKGKACE). 3 disulfide bridges follow: cysteine 191/cysteine 201, cysteine 195/cysteine 207, and cysteine 209/cysteine 218. The interval 228-259 (SPVFGGQSPGAASSWGPPEQAAKHTSSKKADT) is disordered. Residues asparagine 347 and asparagine 378 are each glycosylated (N-linked (GlcNAc...) asparagine). One can recognise an EGF-like 2 domain in the interval 399–431 (RVVICHLPCMNGGQCSSRDKCQCPPNFTGKLCQ). Cystine bridges form between cysteine 403–cysteine 413, cysteine 407–cysteine 419, cysteine 421–cysteine 430, cysteine 559–cysteine 581, cysteine 568–cysteine 594, and cysteine 582–cysteine 597. The N-linked (GlcNAc...) asparagine glycan is linked to asparagine 424. In terms of domain architecture, TB 1 spans 557–609 (GRCFQETIGSQCGKALPGLSKQEDCCGTVGTSWGFNKCQKCPKKPSYHGYNQM). N-linked (GlcNAc...) asparagine glycosylation occurs at asparagine 620. Positions 626–663 (DINECQLQGVCPNGECLNTMGSYRCTCKIGFGPDPTFS) constitute an EGF-like 3; calcium-binding domain. 7 disulfide bridges follow: cysteine 630/cysteine 641, cysteine 636/cysteine 650, cysteine 652/cysteine 665, cysteine 679/cysteine 702, cysteine 689/cysteine 714, cysteine 703/cysteine 717, and cysteine 704/cysteine 729. O-linked (Glc) serine glycosylation occurs at serine 647. A TB 2 domain is found at 677-729 (GPCYRLVSSGRQCMHPLSVHLTKQLCCCSVGKAWGPHCEKCPLPGTAAFKEIC). The tract at residues 750-811 (VGKGPVFVKP…APPEKEIPSL (62 aa)) is disordered. Threonine 769 and threonine 801 each carry an O-linked (GalNAc...) threonine glycan. Residues 873 to 910 (EINECTVNPDICGAGHCINLPVRYTCICYEGYRFSEQQ) enclose the EGF-like 4; calcium-binding domain. Cystine bridges form between cysteine 877–cysteine 889, cysteine 884–cysteine 898, cysteine 900–cysteine 913, cysteine 919–cysteine 931, cysteine 926–cysteine 940, cysteine 942–cysteine 955, cysteine 961–cysteine 972, cysteine 967–cysteine 981, cysteine 984–cysteine 996, cysteine 1002–cysteine 1013, cysteine 1008–cysteine 1022, cysteine 1025–cysteine 1036, cysteine 1042–cysteine 1053, cysteine 1048–cysteine 1062, cysteine 1064–cysteine 1077, cysteine 1083–cysteine 1094, cysteine 1089–cysteine 1103, cysteine 1105–cysteine 1118, cysteine 1124–cysteine 1135, cysteine 1130–cysteine 1144, cysteine 1146–cysteine 1159, cysteine 1165–cysteine 1177, cysteine 1172–cysteine 1186, cysteine 1188–cysteine 1200, cysteine 1206–cysteine 1218, cysteine 1212–cysteine 1227, cysteine 1229–cysteine 1242, cysteine 1248–cysteine 1260, and cysteine 1254–cysteine 1269. Residues 915-956 (DIDECTQVQHLCSQGRCENTEGSFLCICPAGFMASEEGTNCI) enclose the EGF-like 5; calcium-binding domain. Serine 937 carries O-linked (Glc) serine glycosylation. Positions 957–997 (DVDECLRPDVCGEGHCVNTVGAFRCEYCDSGYRMTQRGRCE) constitute an EGF-like 6; calcium-binding domain. Asparagine 974 is modified ((3R)-3-hydroxyasparagine). One can recognise an EGF-like 7; calcium-binding domain in the interval 998-1037 (DIDECLNPSTCPDEQCVNSPGSYQCVPCTEGFRGWNGQCL). Serine 1019 carries O-linked (Glc) serine glycosylation. One can recognise an EGF-like 8; calcium-binding domain in the interval 1038–1078 (DVDECLEPNVCANGDCSNLEGSYMCSCHKGYTRTPDHKHCR). Serine 1059 carries an O-linked (Glc) serine glycan. In terms of domain architecture, EGF-like 9; calcium-binding spans 1079 to 1119 (DIDECQQGNLCVNGQCKNTEGSFRCTCGQGYQLSAAKDQCE). The EGF-like 10; calcium-binding domain occupies 1120–1160 (DIDECQHRHLCAHGQCRNTEGSFQCVCDQGYRASGLGDHCE). Asparagine 1137 is modified ((3R)-3-hydroxyasparagine). O-linked (Glc) serine glycosylation is present at serine 1141. The EGF-like 11; calcium-binding domain occupies 1161–1201 (DINECLEDKSVCQRGDCINTAGSYDCTCPDGFQLDDNKTCQ). Positions 1174–1176 (RGD) match the Cell attachment site motif. Asparagine 1197 is a glycosylation site (N-linked (GlcNAc...) asparagine). The EGF-like 12; calcium-binding domain maps to 1202–1243 (DINECEHPGLCGPQGECLNTEGSFHCVCQQGFSISADGRTCE). Residue serine 1224 is glycosylated (O-linked (Glc) serine). Residues 1244-1281 (DIDECVNNTVCDSHGFCDNTAGSFRCLCYQGFQAPQDG) form the EGF-like 13; calcium-binding domain. Asparagine 1250 is a glycosylation site (N-linked (GlcNAc...) asparagine). Residues 1286-1328 (DVNECELLSGVCGEAFCENVEGSFLCVCADENQEYSPMTGQCR) form the EGF-like 14; calcium-binding domain. The 8-Cys3 region stretch occupies residues 1344–1411 (EEKKECYYNL…PKGKGFVPAG (68 aa)). A TB 3 domain is found at 1347-1401 (KECYYNLNDASLCDNVLAPNVTKQECCCTSGVGWGDNCEIFPCPVLGTAEFTEMC). Intrachain disulfides connect cysteine 1349–cysteine 1372, cysteine 1359–cysteine 1384, cysteine 1373–cysteine 1389, and cysteine 1374–cysteine 1401. An N-linked (GlcNAc...) asparagine glycan is attached at asparagine 1366. Serine 1414 carries the post-translational modification Phosphoserine; by FAM20C. Residues 1424–1466 (DADECLLFGQEICKNGFCLNTRPGYECYCKQGTYYDPVKLQCF) enclose the EGF-like 15; calcium-binding domain. The region spanning 1467 to 1503 (DMDECQDPSSCIDGQCVNTEGSYNCFCTHPMVLDASE) is the EGF-like 16; calcium-binding domain. Intrachain disulfides connect cysteine 1471–cysteine 1482, cysteine 1477–cysteine 1491, cysteine 1526–cysteine 1550, cysteine 1536–cysteine 1562, cysteine 1551–cysteine 1565, and cysteine 1552–cysteine 1577. Serine 1488 carries an O-linked (Glc) serine glycan. A C-terminal domain region spans residues 1507–1721 (IRPAESNEQI…LNLEKDSDLE (215 aa)). Positions 1524-1577 (DLCWEHLSDEYVCSRPLVGKQTTYTECCCLYGEAWGMQCALCPLKDSDDYAQLC) constitute a TB 4 domain. 2 positions are modified to phosphoserine: serine 1597 and serine 1616. Residues 1621–1657 (QAEECGILNGCENGRCVRVQEGYTCDCFDGYHLDTAK) form the EGF-like 17 domain. 5 disulfides stabilise this stretch: cysteine 1625–cysteine 1636, cysteine 1631–cysteine 1645, cysteine 1666–cysteine 1681, cysteine 1676–cysteine 1690, and cysteine 1692–cysteine 1705. An EGF-like 18; calcium-binding domain is found at 1662–1706 (DVNECDELNNRMSLCKNAKCINTDGSYKCLCLPGYVPSDKPNYCT). O-linked (Glc) serine glycosylation is present at serine 1687.

It belongs to the LTBP family. Interacts with TGFB1; associates via disulfide bonds with the Latency-associated peptide chain (LAP) regulatory chain of TGFB1, leading to regulate activation of TGF-beta-1. LTBP1 does not bind directly to TGF-beta-1, the active chain of TGFB1. Interacts (via C-terminal domain) with FBN1 (via N-terminal domain). Interacts with FBN2. Interacts with ADAMTSL2. Interacts with EFEMP2. In terms of processing, contains hydroxylated asparagine residues. Isoform Short N-terminus is blocked. Post-translationally, two intrachain disulfide bonds from the TB3 domain are rearranged upon TGFB1 binding, and form interchain bonds with TGFB1 propeptide, anchoring it to the extracellular matrix. In terms of processing, O-glycosylated on serine residues by POGLUT2 and POGLUT3. In terms of tissue distribution, expressed in the aorta (at protein level). Isoform Long: Expressed in fibroblasts.

The protein localises to the secreted. Its subcellular location is the extracellular space. The protein resides in the extracellular matrix. Key regulator of transforming growth factor beta (TGFB1, TGFB2 and TGFB3) that controls TGF-beta activation by maintaining it in a latent state during storage in extracellular space. Associates specifically via disulfide bonds with the Latency-associated peptide (LAP), which is the regulatory chain of TGF-beta, and regulates integrin-dependent activation of TGF-beta. Outcompeted by LRRC32/GARP for binding to LAP regulatory chain of TGF-beta. This is Latent-transforming growth factor beta-binding protein 1 from Homo sapiens (Human).